Reading from the N-terminus, the 1211-residue chain is RNA helicase Mov10l1 (1211 aa).

2 disordered regions span residues 340–385 (KENS…GENG) and 674–710 (WNHA…RVGD). Polar residues-rich tracts occupy residues 345–372 (DENI…NNRG) and 674–688 (WNHA…QSTS). The span at 694 to 710 (TMTDQAEHGTEERRVGD) shows a compositional bias: basic and acidic residues. An ATP-binding site is contributed by 770 to 777 (GPPGTGKT). Residues 886–889 (DEAG) carry the DEAG box motif. The segment at 1192–1211 (DPSYPVVPESTGPEKHQEPS) is disordered.

This sequence belongs to the DNA2/NAM7 helicase family. SDE3 subfamily. As to quaternary structure, interacts with PIWIL1. Interacts with PIWIL2. Interacts with PIWIL4. Interacts with HSPA2. Interacts with PLD6. In terms of tissue distribution, specifically expressed in testis.

It is found in the cytoplasm. The catalysed reaction is ATP + H2O = ADP + phosphate + H(+). ATP-dependent RNA helicase required during spermatogenesis to repress transposable elements and prevent their mobilization, which is essential for germline integrity. Acts via the piRNA metabolic process, which mediates the repression of transposable elements during meiosis by forming complexes composed of piRNAs and Piwi proteins and governs the methylation and subsequent repression of transposons. Involved in the primary piRNA metabolic process. Specifically binds to piRNA precursors and promotes the generation of intermediate piRNA processing fragments that are subsequently loaded to Piwi proteins. Acts via its ATP-dependent RNA helicase activity: displays 5'-3' RNA unwinding activity and probably mediates unwinding and funneling of single-stranded piRNA precursor transcripts to the endonuclease that catalyzes the first cleavage step of piRNA processing to generate piRNA intermediate fragments that are subsequently loaded to Piwi proteins. The protein is RNA helicase Mov10l1 of Homo sapiens (Human).